The chain runs to 211 residues: Redox-sensing transcriptional repressor Rex (211 aa).

The H-T-H motif DNA-binding region spans 17–56 (KYHRYLEELMKNEVDRISSKELGEKIGFTASQIRQDLNCF). 91 to 96 (GAGNIG) provides a ligand contact to NAD(+).

It belongs to the transcriptional regulatory Rex family. As to quaternary structure, homodimer.

Its subcellular location is the cytoplasm. In terms of biological role, modulates transcription in response to changes in cellular NADH/NAD(+) redox state. The protein is Redox-sensing transcriptional repressor Rex of Clostridium beijerinckii (strain ATCC 51743 / NCIMB 8052) (Clostridium acetobutylicum).